The chain runs to 364 residues: Probable zinc transporter 10 (364 aa).

A signal peptide spans 1–28 (MTKSHVIFSASIALFLLLSISHFPGALS). Over 29 to 52 (QSNKDCQSKSNYSCIDKNKALDLK) the chain is Extracellular. A helical transmembrane segment spans residues 53-73 (LLSIFSILITSLIGVCLPFFA). Topologically, residues 74 to 85 (RSIPAFQPEKSH) are cytoplasmic. A helical membrane pass occupies residues 86 to 106 (FLIVKSFASGIILSTGFMHVL). At 107–125 (PDSFEMLSSPCLNDNPWHK) the chain is on the extracellular side. Residues 126–146 (FPFAGFVAMMSAVFTLMVDSI) form a helical membrane-spanning segment. The Cytoplasmic segment spans residues 147–209 (TTSVFTKSGR…GSYLQLLRYR (63 aa)). Residues 210–230 (ILAIVLELGIVVQSIVIGLSV) traverse the membrane as a helical segment. Residues 231-241 (GDTNNTCTIKG) are Extracellular-facing. The chain crosses the membrane as a helical span at residues 242-262 (LVAALCFHQMFEGMGLGGCIL). Residues 263–271 (QAEYGWVKK) lie on the Cytoplasmic side of the membrane. The helical transmembrane segment at 272–292 (AVMAFFFAVTTPFGVVLGMAL) threads the bilayer. Topologically, residues 293–303 (SKTYKENSPES) are extracellular. Residues 304 to 324 (LITVGLLNASSAGLLIYMALV) form a helical membrane-spanning segment. The Cytoplasmic portion of the chain corresponds to 325–343 (DLLAADFMGQKMQRSIKLQ). A helical membrane pass occupies residues 344–364 (LKSYAAVLLGAGGMSVMAKWA).

This sequence belongs to the ZIP transporter (TC 2.A.5) family.

The protein localises to the cell membrane. In terms of biological role, probably mediates zinc uptake from the rhizosphere. This chain is Probable zinc transporter 10 (ZIP10), found in Arabidopsis thaliana (Mouse-ear cress).